A 130-amino-acid polypeptide reads, in one-letter code: Small ribosomal subunit protein uS11 (130 aa).

It belongs to the universal ribosomal protein uS11 family. As to quaternary structure, part of the 30S ribosomal subunit. Interacts with proteins S7 and S18. Binds to IF-3.

Its function is as follows. Located on the platform of the 30S subunit, it bridges several disparate RNA helices of the 16S rRNA. Forms part of the Shine-Dalgarno cleft in the 70S ribosome. In Prochlorococcus marinus (strain MIT 9301), this protein is Small ribosomal subunit protein uS11.